Consider the following 847-residue polypeptide: Matrin-3 (847 aa).

Residue S2 is modified to N-acetylserine. The residue at position 3 (K3) is an N6-acetyllysine; alternate. A Glycyl lysine isopeptide (Lys-Gly) (interchain with G-Cter in SUMO2); alternate cross-link involves residue K3. 8 positions are modified to phosphoserine: S4, S9, S11, S14, S22, S41, S118, and S126. Residues K132 and K146 each participate in a glycyl lysine isopeptide (Lys-Gly) (interchain with G-Cter in SUMO2) cross-link. Disordered regions lie at residues 146 to 174 (KRRR…YRVP) and 187 to 214 (DSFD…SGYY). T150 is subject to Phosphothreonine. Residue S157 is modified to Phosphoserine. Y158 carries the post-translational modification Phosphotyrosine. The segment covering 160-174 (RDGRSATREPPYRVP) has biased composition (basic and acidic residues). S164, S188, and S195 each carry phosphoserine. Positions 201 to 214 (DYDHGSRSQESGYY) are enriched in basic and acidic residues. Position 202 is a phosphotyrosine (Y202). A phosphoserine mark is found at S206, S208, and S211. Y219 is modified (phosphotyrosine). S234 carries the phosphoserine modification. Residue K245 forms a Glycyl lysine isopeptide (Lys-Gly) (interchain with G-Cter in SUMO2) linkage. S264 is subject to Phosphoserine. A Glycyl lysine isopeptide (Lys-Gly) (interchain with G-Cter in SUMO2) cross-link involves residue K269. A Phosphoserine modification is found at S275. A disordered region spans residues 342 to 394 (PFMLQQSTNPAPGILGPPPPSFHLGGPAVGPRGNLGAGNGNLQGPRHMQKGRV). Residues 398 to 473 (RVVHIMDFQR…KPVRVHLSQK (76 aa)) form the RRM 1 domain. Residues K478, K487, and K491 each participate in a glycyl lysine isopeptide (Lys-Gly) (interchain with G-Cter in SUMO2) cross-link. The region spanning 496 to 571 (RVIHLSNLPH…RCVKVDLSEK (76 aa)) is the RRM 2 domain. Phosphoserine is present on residues S509 and S511. A Glycyl lysine isopeptide (Lys-Gly) (interchain with G-Cter in SUMO2) cross-link involves residue K515. N6-acetyllysine; alternate is present on K522. A Glycyl lysine isopeptide (Lys-Gly) (interchain with G-Cter in SUMO2); alternate cross-link involves residue K522. At S533 the chain carries Phosphoserine. Glycyl lysine isopeptide (Lys-Gly) (interchain with G-Cter in SUMO2) cross-links involve residues K554 and K555. Position 571 is an N6-acetyllysine (K571). The tract at residues 588–786 (KKDKSRKRSY…DEYRIGPYQP (199 aa)) is disordered. Phosphoserine occurs at positions 596, 598, 604, and 606. The segment covering 600–643 (DGKESPSDKKSKTDGSQKTESSTEGKEQEEKSGEDGEKDTKDDQ) has biased composition (basic and acidic residues). Residues K617 and K630 each participate in a glycyl lysine isopeptide (Lys-Gly) (interchain with G-Cter in SUMO2) cross-link. Positions 653–665 (ESEDELLVDEEEA) are enriched in acidic residues. S654, S671, S673, and S674 each carry phosphoserine. Positions 666-676 (AALLESGSSVG) are enriched in low complexity. Phosphothreonine is present on T679. S689 bears the Phosphoserine mark. The span at 689 to 704 (SDGKKEPSDKAVKKDG) shows a compositional bias: basic and acidic residues. The Nuclear localization signal signature appears at 710-718 (AKKKLKKVD). Glycyl lysine isopeptide (Lys-Gly) (interchain with G-Cter in SUMO2) cross-links involve residues K719 and K736. A Phosphothreonine modification is found at T741. A phosphoserine mark is found at S747, S759, and S766. A compositionally biased stretch (basic and acidic residues) spans 767–780 (DENKDDYTIPDEYR). K770 participates in a covalent cross-link: Glycyl lysine isopeptide (Lys-Gly) (interchain with G-Cter in SUMO2). The Matrin-type zinc finger occupies 801–832 (FYCKLCSLFYTNEEVAKNTHCSSLPHYQKLKK). At K836 the chain carries N6-acetyllysine; alternate. Residue K836 forms a Glycyl lysine isopeptide (Lys-Gly) (interchain with G-Cter in SUMO2); alternate linkage.

Part of a complex consisting of SFPQ, NONO and MATR3. Interacts with AGO1 and AGO2. Part of a complex composed at least of ASH2L, EMSY, HCFC1, HSPA8, CCAR2, MATR3, MKI67, RBBP5, TUBB2A, WDR5 and ZNF335; this complex may have a histone H3-specific methyltransferase activity. Interacts with TARDBP. Part of the HDP-RNP complex composed of at least HEXIM1, PRKDC, XRCC5, XRCC6, paraspeckle proteins (SFPQ, NONO, PSPC1, RBM14, and MATR3) and NEAT1 RNA. Interacts with FUS. Interacts with IGF2BP1; the interaction is enhanced by SEPIN14P20 peptide RBPR. Interacts with IGF2BP2 and IGF2BP3. Interacts with RBPMS.

It is found in the nucleus matrix. Functionally, may play a role in transcription or may interact with other nuclear matrix proteins to form the internal fibrogranular network. In association with the SFPQ-NONO heteromer may play a role in nuclear retention of defective RNAs. Plays a role in the regulation of DNA virus-mediated innate immune response by assembling into the HDP-RNP complex, a complex that serves as a platform for IRF3 phosphorylation and subsequent innate immune response activation through the cGAS-STING pathway. Binds to N6-methyladenosine (m6A)-containing mRNAs and contributes to MYC stability by binding to m6A-containing MYC mRNAs. May bind to specific miRNA hairpins. This is Matrin-3 (MATR3) from Homo sapiens (Human).